The chain runs to 453 residues: tRNA modification GTPase MnmE (453 aa).

The (6S)-5-formyl-5,6,7,8-tetrahydrofolate site is built by arginine 22, glutamate 79, and lysine 119. Positions 215 to 376 (GMKVVIAGRP…LKQHLKSLMG (162 aa)) constitute a TrmE-type G domain. K(+) is bound at residue asparagine 225. GTP contacts are provided by residues 225 to 230 (NAGKSS), 244 to 250 (TEIAGTT), 269 to 272 (DTAG), and 334 to 337 (NKAD). Position 229 (serine 229) interacts with Mg(2+). K(+)-binding residues include threonine 244, isoleucine 246, and threonine 249. Mg(2+) is bound at residue threonine 250. Residue lysine 453 participates in (6S)-5-formyl-5,6,7,8-tetrahydrofolate binding.

Belongs to the TRAFAC class TrmE-Era-EngA-EngB-Septin-like GTPase superfamily. TrmE GTPase family. In terms of assembly, homodimer. Heterotetramer of two MnmE and two MnmG subunits. The cofactor is K(+).

It localises to the cytoplasm. In terms of biological role, exhibits a very high intrinsic GTPase hydrolysis rate. Involved in the addition of a carboxymethylaminomethyl (cmnm) group at the wobble position (U34) of certain tRNAs, forming tRNA-cmnm(5)s(2)U34. The chain is tRNA modification GTPase MnmE from Shewanella halifaxensis (strain HAW-EB4).